The primary structure comprises 250 residues: HLA class II histocompatibility antigen, DO alpha chain (250 aa).

The first 25 residues, 1 to 25 (MALRAGLVLGFHTLMTLLSPQEAGA), serve as a signal peptide directing secretion. The segment at 26 to 110 (TKADHMGSYG…ERSNRSRAIN (85 aa)) is alpha-1. Over 26–217 (TKADHMGSYG…VPIPPPDAME (192 aa)) the chain is Extracellular. N-linked (GlcNAc...) asparagine glycosylation is found at Asn-104 and Asn-144. The interval 111-204 (VPPRVTVLPK…GLDAPLLRHW (94 aa)) is alpha-2. The 93-residue stretch at 113–205 (PRVTVLPKSR…LDAPLLRHWE (93 aa)) folds into the Ig-like C1-type domain. A disulfide bridge connects residues Cys-133 and Cys-189. The tract at residues 205–217 (ELQVPIPPPDAME) is connecting peptide. A helical membrane pass occupies residues 218 to 240 (TLVCALGLAIGLVGFLVGTVLII). Topologically, residues 241-250 (MGTYVSSVPR) are cytoplasmic.

It belongs to the MHC class II family. Heterodimer of an alpha chain (DOA) and a beta chain (DOB). Forms a heterotetrameric complex with an HLA-DM molecule during intracellular transport in endosomal/lysosomal compartments in B-cells.

Its subcellular location is the endosome membrane. It is found in the lysosome membrane. Its function is as follows. Important modulator in the HLA class II restricted antigen presentation pathway by interaction with the HLA-DM molecule in B-cells. Modifies peptide exchange activity of HLA-DM. The protein is HLA class II histocompatibility antigen, DO alpha chain (HLA-DOA) of Homo sapiens (Human).